Consider the following 282-residue polypeptide: Proteasome subunit beta (282 aa).

A propeptide spans 1–55 (MDNSSTGRYPAASLPPAYLRPGSSSFTDFLRAQAPELLPTARSFPEGSVVQAAHG) (removed in mature form; by autocatalysis). Thr-56 (nucleophile) is an active-site residue.

This sequence belongs to the peptidase T1B family. As to quaternary structure, the 20S proteasome core is composed of 14 alpha and 14 beta subunits that assemble into four stacked heptameric rings, resulting in a barrel-shaped structure. The two inner rings, each composed of seven catalytic beta subunits, are sandwiched by two outer rings, each composed of seven alpha subunits. The catalytic chamber with the active sites is on the inside of the barrel. Has a gated structure, the ends of the cylinder being occluded by the N-termini of the alpha-subunits. Is capped by the proteasome-associated ATPase, ARC.

It is found in the cytoplasm. It carries out the reaction Cleavage of peptide bonds with very broad specificity.. It functions in the pathway protein degradation; proteasomal Pup-dependent pathway. The formation of the proteasomal ATPase ARC-20S proteasome complex, likely via the docking of the C-termini of ARC into the intersubunit pockets in the alpha-rings, may trigger opening of the gate for substrate entry. Interconversion between the open-gate and close-gate conformations leads to a dynamic regulation of the 20S proteasome proteolysis activity. Component of the proteasome core, a large protease complex with broad specificity involved in protein degradation. The sequence is that of Proteasome subunit beta from Actinosynnema mirum (strain ATCC 29888 / DSM 43827 / JCM 3225 / NBRC 14064 / NCIMB 13271 / NRRL B-12336 / IMRU 3971 / 101).